A 285-amino-acid chain; its full sequence is N(G),N(G)-dimethylarginine dimethylaminohydrolase 1 (285 aa).

Ala2 is subject to N-acetylalanine. Residues Leu30, Asp73, 78-79 (ED), Arg98, and Arg145 contribute to the substrate site. His173 (proton donor) is an active-site residue. S-nitrosocysteine is present on Cys222. Val268 contributes to the substrate binding site. Cys274 is subject to S-nitrosocysteine. Catalysis depends on Cys274, which acts as the Nucleophile. Cys274 contributes to the Zn(2+) binding site.

It belongs to the DDAH family. As to quaternary structure, monomer. As to expression, detected in brain, liver, kidney and pancreas, and at low levels in skeletal muscle.

The catalysed reaction is N(omega),N(omega)-dimethyl-L-arginine + H2O = dimethylamine + L-citrulline. It carries out the reaction N(omega)-methyl-L-arginine + H2O = L-citrulline + methylamine. Inhibited by zinc ions. Enzyme purified in the absence of 1,10-phenanthroline contains on average 0.4 zinc atoms per subunit. Inhibited by 4-hydroxy-nonenal through the formation of a covalent adduct with His-173. Competitively inhibited by N(5)-iminopropyl-ornithine. In terms of biological role, hydrolyzes N(G),N(G)-dimethyl-L-arginine (ADMA) and N(G)-monomethyl-L-arginine (MMA) which act as inhibitors of NOS. Has therefore a role in the regulation of nitric oxide generation. This Homo sapiens (Human) protein is N(G),N(G)-dimethylarginine dimethylaminohydrolase 1.